The sequence spans 396 residues: MSQEFNEIDANTIETNYDNVVYSFDDLNLKPNIVRGIFGYGYESPSAIQQRAILPITEGRDVLAQAQSGTGKTATFTISALQRIDENLKATQALILAPTRELALQIQNVITHIGLYLNVTVHASIGGTSMKDDIEAFKSGVQIVVGTPGRVFDMIERRFFRTDKVKMFIMDEADEMLSSGFKEQIYNIFRLLPETTQVVLLSATMPQDVLEVTTKFMNNPVRILVKKDELTLEGIKQFYINVEQEDFKFDCLCDLYDSISVTQAVIFCNTRSKVEFLTTKLKAENFTVSAIHADLPQSDRDTIMNEFRSGSSRILIATDLLARGIDVQQVSLVINYDLPANKENYIHRIGRGGRFGRKGVAINFVTDEDVGMMREIEKFYSTQIEEMPANIGELFN.

The short motif at 22–50 is the Q motif element; the sequence is YSFDDLNLKPNIVRGIFGYGYESPSAIQQ. The Helicase ATP-binding domain occupies 53–223; it reads ILPITEGRDV…TKFMNNPVRI (171 aa). Residue 66–73 participates in ATP binding; the sequence is AQSGTGKT. Residues 171-174 carry the DEAD box motif; the sequence is DEAD. Residues 234-395 enclose the Helicase C-terminal domain; that stretch reads GIKQFYINVE…EMPANIGELF (162 aa).

This sequence belongs to the DEAD box helicase family. eIF4A subfamily. As to quaternary structure, component of the eIF4F complex, which composition varies with external and internal environmental conditions. It is composed of at least eIF4A, eIF4E and eIF4G.

The protein localises to the cytoplasm. It catalyses the reaction ATP + H2O = ADP + phosphate + H(+). Its function is as follows. ATP-dependent RNA helicase which is a subunit of the eIF4F complex involved in cap recognition and is required for mRNA binding to ribosome. In the current model of translation initiation, eIF4A unwinds RNA secondary structures in the 5'-UTR of mRNAs which is necessary to allow efficient binding of the small ribosomal subunit, and subsequent scanning for the initiator codon. The polypeptide is ATP-dependent RNA helicase eIF4A (TIF1) (Meyerozyma guilliermondii (strain ATCC 6260 / CBS 566 / DSM 6381 / JCM 1539 / NBRC 10279 / NRRL Y-324) (Yeast)).